The primary structure comprises 58 residues: Ribosome modulation factor (58 aa).

It belongs to the ribosome modulation factor family.

The protein resides in the cytoplasm. Its function is as follows. During stationary phase, converts 70S ribosomes to an inactive dimeric form (100S ribosomes). This Tolumonas auensis (strain DSM 9187 / NBRC 110442 / TA 4) protein is Ribosome modulation factor.